The following is a 622-amino-acid chain: Probable potassium transport system protein Kup 2 (622 aa).

12 consecutive transmembrane segments (helical) span residues 9–29 (LSGVTLAAIGVVYGDIGTSPL), 46–66 (PASILGFLSLIFWLLILVVSV), 99–119 (TPLLIILGLIGGSFFYGEVVI), 137–157 (PSLDPYIVPLSVLVLTLLFAI), 169–189 (FAPIMLTWFITLAVLGLNSIF), 213–233 (ASFFALGAVVLAITGVEALYA), 247–267 (WFMVVLPSLVLNYFGQGALLL), 285–305 (ALLPLLLLATLATVIASQAVI), 337–357 (IYIPVINWMLYISVVIVIMSF), 363–383 (LAAAYGIAVTGTMVLTSILSC), 396–416 (LVAALFVALLAIDVPLFAANL), and 419–439 (IFSGGWLPLTLGAVMFTVMTS).

It belongs to the HAK/KUP transporter (TC 2.A.72) family.

Its subcellular location is the cell inner membrane. The enzyme catalyses K(+)(in) + H(+)(in) = K(+)(out) + H(+)(out). Functionally, transport of potassium into the cell. Likely operates as a K(+):H(+) symporter. This is Probable potassium transport system protein Kup 2 from Aeromonas hydrophila subsp. hydrophila (strain ATCC 7966 / DSM 30187 / BCRC 13018 / CCUG 14551 / JCM 1027 / KCTC 2358 / NCIMB 9240 / NCTC 8049).